Consider the following 809-residue polypeptide: Lon protease (809 aa).

In terms of domain architecture, Lon N-terminal spans 8–203 (LPVVALRNMA…RLCLILADEI (196 aa)). 354-361 (GPPGTGKT) contacts ATP. The Lon proteolytic domain maps to 629 to 809 (KDEVGIVCGL…MDEVLKHALV (181 aa)). Active-site residues include Ser716 and Lys759.

The protein belongs to the peptidase S16 family. As to quaternary structure, homohexamer. Organized in a ring with a central cavity.

The protein localises to the cytoplasm. It catalyses the reaction Hydrolysis of proteins in presence of ATP.. Functionally, ATP-dependent serine protease that mediates the selective degradation of mutant and abnormal proteins as well as certain short-lived regulatory proteins. Required for cellular homeostasis and for survival from DNA damage and developmental changes induced by stress. Degrades polypeptides processively to yield small peptide fragments that are 5 to 10 amino acids long. Binds to DNA in a double-stranded, site-specific manner. This Lachnoclostridium phytofermentans (strain ATCC 700394 / DSM 18823 / ISDg) (Clostridium phytofermentans) protein is Lon protease.